A 207-amino-acid polypeptide reads, in one-letter code: N-(5'-phosphoribosyl)anthranilate isomerase (207 aa).

It belongs to the TrpF family.

It carries out the reaction N-(5-phospho-beta-D-ribosyl)anthranilate = 1-(2-carboxyphenylamino)-1-deoxy-D-ribulose 5-phosphate. The protein operates within amino-acid biosynthesis; L-tryptophan biosynthesis; L-tryptophan from chorismate: step 3/5. This chain is N-(5'-phosphoribosyl)anthranilate isomerase, found in Halorhodospira halophila (strain DSM 244 / SL1) (Ectothiorhodospira halophila (strain DSM 244 / SL1)).